The chain runs to 236 residues: (5-formylfuran-3-yl)methyl phosphate synthase (236 aa).

The active-site Schiff-base intermediate with substrate is K27. The active-site Proton acceptor is the K85.

Belongs to the MfnB family.

It carries out the reaction 2 D-glyceraldehyde 3-phosphate = 4-(hydroxymethyl)-2-furancarboxaldehyde phosphate + phosphate + 2 H2O. It participates in cofactor biosynthesis; methanofuran biosynthesis. Functionally, catalyzes the formation of 4-(hydroxymethyl)-2-furancarboxaldehyde phosphate (4-HFC-P) from two molecules of glyceraldehyde-3-P (GA-3-P). This Methanothermobacter thermautotrophicus (strain ATCC 29096 / DSM 1053 / JCM 10044 / NBRC 100330 / Delta H) (Methanobacterium thermoautotrophicum) protein is (5-formylfuran-3-yl)methyl phosphate synthase.